We begin with the raw amino-acid sequence, 222 residues long: Glutathione S-transferase A5 (222 aa).

An N-acetylalanine modification is found at A2. One can recognise a GST N-terminal domain in the interval E3 to G83. N6-succinyllysine is present on K4. Glutathione-binding positions include Y9, R45, Q54–V55, and Q67–T68. Residues D85–M208 form the GST C-terminal domain.

Belongs to the GST superfamily. Alpha family. As to quaternary structure, homodimer. Expression not detected.

The protein resides in the cytoplasm. It catalyses the reaction RX + glutathione = an S-substituted glutathione + a halide anion + H(+). The protein is Glutathione S-transferase A5 (GSTA5) of Homo sapiens (Human).